The following is a 202-amino-acid chain: Holliday junction branch migration complex subunit RuvA (202 aa).

Positions 1–64 are domain I; it reads MIGRLRGTLA…EDAQLLYGFA (64 aa). Residues 65–143 are domain II; that stretch reads GKRERDFFRE…AWETSPAMFA (79 aa). Residues 144 to 154 are flexible linker; sequence LVPNQPDGPAP. Positions 154-202 are domain III; sequence PVNTAENDAVSALISLGYKPQEASKAISAIKEKGLSSEDMIRRALKGMI.

This sequence belongs to the RuvA family. Homotetramer. Forms an RuvA(8)-RuvB(12)-Holliday junction (HJ) complex. HJ DNA is sandwiched between 2 RuvA tetramers; dsDNA enters through RuvA and exits via RuvB. An RuvB hexamer assembles on each DNA strand where it exits the tetramer. Each RuvB hexamer is contacted by two RuvA subunits (via domain III) on 2 adjacent RuvB subunits; this complex drives branch migration. In the full resolvosome a probable DNA-RuvA(4)-RuvB(12)-RuvC(2) complex forms which resolves the HJ.

It localises to the cytoplasm. In terms of biological role, the RuvA-RuvB-RuvC complex processes Holliday junction (HJ) DNA during genetic recombination and DNA repair, while the RuvA-RuvB complex plays an important role in the rescue of blocked DNA replication forks via replication fork reversal (RFR). RuvA specifically binds to HJ cruciform DNA, conferring on it an open structure. The RuvB hexamer acts as an ATP-dependent pump, pulling dsDNA into and through the RuvAB complex. HJ branch migration allows RuvC to scan DNA until it finds its consensus sequence, where it cleaves and resolves the cruciform DNA. The protein is Holliday junction branch migration complex subunit RuvA of Pseudomonas fluorescens (strain Pf0-1).